We begin with the raw amino-acid sequence, 352 residues long: Probable gamma-glutamyl hydrolase 3 (352 aa).

Positions Met-1 to Lys-19 are cleaved as a signal peptide. The 304-residue stretch at Ala-49 to Thr-352 folds into the Gamma-glutamyl hydrolase domain. Cys-166 acts as the Nucleophile in catalysis. Residue His-279 is part of the active site.

This sequence belongs to the peptidase C26 family.

It localises to the vacuole. Its subcellular location is the secreted. The protein resides in the extracellular space. The protein localises to the cell wall. The catalysed reaction is (6S)-5,6,7,8-tetrahydrofolyl-(gamma-L-Glu)(n) + (n-1) H2O = (6S)-5,6,7,8-tetrahydrofolate + (n-1) L-glutamate. Cleaves the polyglutamate sidechains of folate polyglutamates in the vacuole. Is important for polyglutamyl tail length determination before vacuolar exit. Plays a role on folate stability and intracellular folate content. This Arabidopsis thaliana (Mouse-ear cress) protein is Probable gamma-glutamyl hydrolase 3 (GGH3).